Reading from the N-terminus, the 214-residue chain is Outer-membrane lipoprotein LolB (214 aa).

Residues 1–25 (MNNLKRLTKTIFSCFTLSALLLLAG) form the signal peptide. A lipid anchor (N-palmitoyl cysteine) is attached at C26. C26 carries S-diacylglycerol cysteine lipidation. Positions 143–160 (QVIESDSQGKPKQLTNTQ) are enriched in polar residues. The tract at residues 143–163 (QVIESDSQGKPKQLTNTQTPP) is disordered.

This sequence belongs to the LolB family. Monomer.

The protein resides in the cell outer membrane. In terms of biological role, plays a critical role in the incorporation of lipoproteins in the outer membrane after they are released by the LolA protein. In Shewanella baltica (strain OS223), this protein is Outer-membrane lipoprotein LolB.